Reading from the N-terminus, the 363-residue chain is Glutamate 5-kinase (363 aa).

Lys6 is a binding site for ATP. Substrate-binding residues include Ser46, Asp133, and Asn145. Residues Thr165–Asp166 and Thr207–Lys213 each bind ATP. Residues Thr271–Thr349 form the PUA domain.

Belongs to the glutamate 5-kinase family.

Its subcellular location is the cytoplasm. It catalyses the reaction L-glutamate + ATP = L-glutamyl 5-phosphate + ADP. It participates in amino-acid biosynthesis; L-proline biosynthesis; L-glutamate 5-semialdehyde from L-glutamate: step 1/2. Catalyzes the transfer of a phosphate group to glutamate to form L-glutamate 5-phosphate. The sequence is that of Glutamate 5-kinase from Deinococcus geothermalis (strain DSM 11300 / CIP 105573 / AG-3a).